Here is a 336-residue protein sequence, read N- to C-terminus: Flavonoid 6-O-methyltransferase 4 (336 aa).

Residues Tyr-140 and Asp-203 each contribute to the S-adenosyl-L-methionine site. Catalysis depends on His-241, which acts as the Proton acceptor.

Belongs to the class I-like SAM-binding methyltransferase superfamily. Cation-independent O-methyltransferase family. As to quaternary structure, homodimer. As to expression, expressed in leaves.

The catalysed reaction is ladanein + S-adenosyl-L-methionine = salvigenin + S-adenosyl-L-homocysteine + H(+). The enzyme catalyses scutellarein 7-methyl ether + S-adenosyl-L-methionine = cirsimaritin + S-adenosyl-L-homocysteine + H(+). The protein operates within flavonoid metabolism. In terms of biological role, flavonoid 6-O-methyltransferase involved in the biosynthesis of polymethoxylated flavonoids natural products such as nevadensin and salvigenin (SALV), aroma compounds which contribute to the flavor of sweet basil, and exhibit pharmacological activities such as anti-allergic, anti-oxidant, antibacterial, anti-proliferative, and anti-inflammatory effects. Catalyzes S-adenosylmethionine-dependent regioselective 6-O-methylation of flavonoids; active on various hydroxylated flavonoid substrates, including scutellarein-7-methyl ether (SCU7Me) and ladanein (LAD). This chain is Flavonoid 6-O-methyltransferase 4, found in Ocimum basilicum (Sweet basil).